Here is a 224-residue protein sequence, read N- to C-terminus: Uracil-DNA glycosylase (224 aa).

D62 functions as the Proton acceptor in the catalytic mechanism.

It belongs to the uracil-DNA glycosylase (UDG) superfamily. UNG family.

It is found in the cytoplasm. The enzyme catalyses Hydrolyzes single-stranded DNA or mismatched double-stranded DNA and polynucleotides, releasing free uracil.. Its function is as follows. Excises uracil residues from the DNA which can arise as a result of misincorporation of dUMP residues by DNA polymerase or due to deamination of cytosine. In Aliivibrio salmonicida (strain LFI1238) (Vibrio salmonicida (strain LFI1238)), this protein is Uracil-DNA glycosylase.